The chain runs to 412 residues: DNA utilization protein HofQ (412 aa).

The N-terminal stretch at 1-18 (MKQWIAALLLMLIPGVQA) is a signal peptide.

This sequence belongs to the bacterial secretin family. PilQ subfamily.

The protein resides in the cell outer membrane. Functionally, required for the use of extracellular DNA as a nutrient. Could be the porin responsible for transport of DNA across the outer membrane. The protein is DNA utilization protein HofQ (hofQ) of Escherichia coli (strain K12).